The chain runs to 138 residues: PilB-specific inhibitory protein CpiA (138 aa).

Interacts with PilB but not with TfpB.

In terms of biological role, acts as a PilB inhibitor to control natural transformation. Inhibits type IV pili (T4P) extension by specifically binding and inhibiting the pilus extension ATPase PilB but not TfpB. This activity probably modulates T4P extension under different environmental conditions. The chain is PilB-specific inhibitory protein CpiA from Acinetobacter baylyi (strain ATCC 33305 / BD413 / ADP1).